We begin with the raw amino-acid sequence, 370 residues long: Holliday junction branch migration complex subunit RuvB 2 (370 aa).

Residues methionine 1–arginine 54 are disordered. A large ATPase domain (RuvB-L) region spans residues aspartate 13–tyrosine 214. ATP-binding positions include leucine 53, arginine 54, glycine 95, lysine 98, threonine 99, threonine 100, glutamate 161–phenylalanine 163, arginine 204, tyrosine 214, and arginine 251. Threonine 99 is a Mg(2+) binding site. The segment at glutamate 215–glutamine 285 is small ATPAse domain (RuvB-S). A head domain (RuvB-H) region spans residues proline 288–serine 370. Residues arginine 343 and arginine 348 each coordinate DNA.

This sequence belongs to the RuvB family. Homohexamer. Forms an RuvA(8)-RuvB(12)-Holliday junction (HJ) complex. HJ DNA is sandwiched between 2 RuvA tetramers; dsDNA enters through RuvA and exits via RuvB. An RuvB hexamer assembles on each DNA strand where it exits the tetramer. Each RuvB hexamer is contacted by two RuvA subunits (via domain III) on 2 adjacent RuvB subunits; this complex drives branch migration. In the full resolvosome a probable DNA-RuvA(4)-RuvB(12)-RuvC(2) complex forms which resolves the HJ.

It localises to the cytoplasm. It carries out the reaction ATP + H2O = ADP + phosphate + H(+). Functionally, the RuvA-RuvB-RuvC complex processes Holliday junction (HJ) DNA during genetic recombination and DNA repair, while the RuvA-RuvB complex plays an important role in the rescue of blocked DNA replication forks via replication fork reversal (RFR). RuvA specifically binds to HJ cruciform DNA, conferring on it an open structure. The RuvB hexamer acts as an ATP-dependent pump, pulling dsDNA into and through the RuvAB complex. RuvB forms 2 homohexamers on either side of HJ DNA bound by 1 or 2 RuvA tetramers; 4 subunits per hexamer contact DNA at a time. Coordinated motions by a converter formed by DNA-disengaged RuvB subunits stimulates ATP hydrolysis and nucleotide exchange. Immobilization of the converter enables RuvB to convert the ATP-contained energy into a lever motion, pulling 2 nucleotides of DNA out of the RuvA tetramer per ATP hydrolyzed, thus driving DNA branch migration. The RuvB motors rotate together with the DNA substrate, which together with the progressing nucleotide cycle form the mechanistic basis for DNA recombination by continuous HJ branch migration. Branch migration allows RuvC to scan DNA until it finds its consensus sequence, where it cleaves and resolves cruciform DNA. The polypeptide is Holliday junction branch migration complex subunit RuvB 2 (Synechococcus sp. (strain JA-3-3Ab) (Cyanobacteria bacterium Yellowstone A-Prime)).